The following is a 257-amino-acid chain: Enterotoxin type A (257 aa).

Positions 1–27 (MKKTAFILLLFIALTWTTSPLVNGSEK) are cleaved as a signal peptide. C120 and C130 are joined by a disulfide. Residues H211, H249, and D251 each coordinate Zn(2+).

This sequence belongs to the staphylococcal/streptococcal toxin family. Monomer. Interacts with MHC class II molecules alpha/HLA-DRB1 and beta/HLA-DRA chains. The interaction with MHC-II molecules occurs at both zinc-dependent and zinc-independent sites. Interacts with T-cell receptor beta variable 7-9/TRBV7-9. Zn(2+) serves as cofactor.

Its subcellular location is the secreted. In terms of biological role, staphylococcal enterotoxin that activates the host immune system by binding as unprocessed molecules to major histocompatibility (MHC) complex class II and T-cell receptor (TCR) molecules. In turn, waves of cellular activation, cytokine production, and migration into the lung tissue and airways occur via alphabeta T-cells. Also causes the intoxication staphylococcal food poisoning syndrome. The illness is characterized by high fever, hypotension, diarrhea, shock, and in some cases death. The protein is Enterotoxin type A (sea) of Staphylococcus aureus (strain Newman).